The primary structure comprises 994 residues: Valine--tRNA ligase (994 aa).

Positions 43–53 match the 'HIGH' region motif; the sequence is PNVTGTLHMGH. The segment at 332–356 is disordered; sequence IASGATSDTTDTPSDSDASNASNQH. Positions 333–353 are enriched in low complexity; sequence ASGATSDTTDTPSDSDASNAS. The 'KMSKS' region signature appears at 585–589; that stretch reads KMSKS. Lys588 contributes to the ATP binding site. The segment at 691–713 is disordered; it reads TAHSPAQHQAGQDGQDVPRTPQP. Residues 928-994 are a coiled coil; sequence LIDVDAERAR…NGLRERRTTL (67 aa).

It belongs to the class-I aminoacyl-tRNA synthetase family. ValS type 1 subfamily. Monomer.

It localises to the cytoplasm. The enzyme catalyses tRNA(Val) + L-valine + ATP = L-valyl-tRNA(Val) + AMP + diphosphate. Functionally, catalyzes the attachment of valine to tRNA(Val). As ValRS can inadvertently accommodate and process structurally similar amino acids such as threonine, to avoid such errors, it has a 'posttransfer' editing activity that hydrolyzes mischarged Thr-tRNA(Val) in a tRNA-dependent manner. The polypeptide is Valine--tRNA ligase (Xylella fastidiosa (strain M23)).